The chain runs to 110 residues: Flagellar hook-basal body complex protein FliE (110 aa).

This sequence belongs to the FliE family.

Its subcellular location is the bacterial flagellum basal body. This Ralstonia nicotianae (strain ATCC BAA-1114 / GMI1000) (Ralstonia solanacearum) protein is Flagellar hook-basal body complex protein FliE.